Consider the following 300-residue polypeptide: Vetispiradiene synthase 2 (300 aa).

Residues Asp-54, Asp-58, Asp-197, Thr-201, and Glu-205 each contribute to the Mg(2+) site. The DDXXD motif motif lies at 54–58 (DDTFD).

This sequence belongs to the terpene synthase family. Tpsa subfamily. Requires Mg(2+) as cofactor.

It is found in the cytoplasm. The catalysed reaction is (2E,6E)-farnesyl diphosphate = (-)-vetispiradiene + diphosphate. It participates in secondary metabolite biosynthesis; terpenoid biosynthesis. Its function is as follows. Sesquiterpene synthase that catalyzes the formation of vetispiradiene from trans,trans-farnesyl diphosphate. The initial internal cyclization produces the monocyclic intermediate germacrene A. In Hyoscyamus muticus (Egyptian henbane), this protein is Vetispiradiene synthase 2.